Consider the following 124-residue polypeptide: Histone H2A (124 aa).

Positions 1 to 18 (MSGRGKGGKAKGKSKSRS) are enriched in basic residues. The interval 1–23 (MSGRGKGGKAKGKSKSRSSRAGL) is disordered. Position 2 is an N-acetylserine (Ser2). Position 2 is a phosphoserine (Ser2). Gln104 carries the post-translational modification N5-methylglutamine.

Belongs to the histone H2A family. The nucleosome is a histone octamer containing two molecules each of H2A, H2B, H3 and H4 assembled in one H3-H4 heterotetramer and two H2A-H2B heterodimers. The octamer wraps approximately 147 bp of DNA. The N-terminal serine is acetylated. That serine is also phosphorylated in approximately 60% of the molecules isolated from erythrocytes.

It localises to the nucleus. The protein resides in the chromosome. Its function is as follows. Core component of nucleosome. Nucleosomes wrap and compact DNA into chromatin, limiting DNA accessibility to the cellular machineries which require DNA as a template. Histones thereby play a central role in transcription regulation, DNA repair, DNA replication and chromosomal stability. DNA accessibility is regulated via a complex set of post-translational modifications of histones, also called histone code, and nucleosome remodeling. This chain is Histone H2A, found in Sipunculus nudus (Sipunculan worm).